The primary structure comprises 194 residues: Small ribosomal subunit protein uS7 (194 aa).

It belongs to the universal ribosomal protein uS7 family. In terms of assembly, part of the 30S ribosomal subunit.

Functionally, one of the primary rRNA binding proteins, it binds directly to 16S rRNA where it nucleates assembly of the head domain of the 30S subunit. Is located at the subunit interface close to the decoding center. In Archaeoglobus fulgidus (strain ATCC 49558 / DSM 4304 / JCM 9628 / NBRC 100126 / VC-16), this protein is Small ribosomal subunit protein uS7.